We begin with the raw amino-acid sequence, 3411 residues long: Genome polyprotein (3411 aa).

Residues 1–104 (MSGRKAQGKT…LSSRKRRSHD (104 aa)) are Cytoplasmic-facing. The interval 38–72 (PGPSRGVQGFIFFFLFNILTGKKITAHLKRLWKML) is hydrophobic; homodimerization of capsid protein C. Positions 102 to 121 (SHDVLTVQFLILGMLLMTGG) are cleaved as a propeptide — ER anchor for the capsid protein C, removed in mature form by serine protease NS3. A helical membrane pass occupies residues 105–125 (VLTVQFLILGMLLMTGGVTLV). The Extracellular portion of the chain corresponds to 126–244 (RKNRWLLLNV…GERQLQKIER (119 aa)). Residues Asn-134 and Asn-150 are each glycosylated (N-linked (GlcNAc...) asparagine; by host). The chain crosses the membrane as a helical span at residues 245–265 (WLVRNPFFAVTALTIAYLVGS). At 266 to 270 (NMTQR) the chain is on the cytoplasmic side. A helical membrane pass occupies residues 271 to 285 (VVIALLVLAVGPAYS). Residues 286 to 730 (AHCIGITDRD…TVFGSAFQGL (445 aa)) lie on the Extracellular side of the membrane. Cystine bridges form between Cys-288–Cys-315, Cys-345–Cys-401, Cys-345–Cys-406, Cys-359–Cys-390, Cys-377–Cys-401, Cys-377–Cys-406, Cys-467–Cys-568, and Cys-585–Cys-615. Residues 383 to 396 (DRGWGNGCGLFGKG) are fusion peptide. A helical membrane pass occupies residues 731 to 751 (FGGLNWITKVIMGAVLIWVGI). The Extracellular portion of the chain corresponds to 752 to 757 (NTRNMT). The chain crosses the membrane as a helical span at residues 758-778 (MSMSMILVGVIMMFLSLGVGA). The Extracellular segment spans residues 779–1132 (DQGCAINFGK…LVRSWVTAGE (354 aa)). 6 disulfides stabilise this stretch: Cys-782-Cys-793, Cys-833-Cys-921, Cys-957-Cys-1002, Cys-1058-Cys-1107, Cys-1069-Cys-1091, and Cys-1090-Cys-1094. 2 N-linked (GlcNAc...) asparagine; by host glycosylation sites follow: Asn-908 and Asn-986. Residues 1133–1153 (IHAVPFGLVSMMIAMEVVLRK) traverse the membrane as a helical segment. Over 1154–1201 (RQGPKQMLVGGVVLLGAMLVGQVTLLDLLKLTVAVGLHFHEMNNGGDA) the chain is Cytoplasmic. The helical transmembrane segment at 1202–1222 (MYMALIAAFSIRPGLLIGFGL) threads the bilayer. Residues 1223 to 1287 (RTLWSPRERL…ILPLMALLTP (65 aa)) are Lumenal-facing. The helical transmembrane segment at 1288 to 1308 (VTMAEVRLATMLFCTVVIIGV) threads the bilayer. At 1309-1355 (LHQNSKDTSMQKTIPLVALTLTSYLGLTQPFLGLCAFLATRIFGRRS) the chain is on the cytoplasmic side. A helical transmembrane segment spans residues 1356-1376 (IPVNEALAAAGLVGVLAGLAF). Topologically, residues 1377–1378 (QE) are lumenal. The helical transmembrane segment at 1379 to 1399 (MENFLGPIAVGGILMMLVSVA) threads the bilayer. Residues 1400–1456 (GRVDGLELKKLGEVSWEEEAEISGSSARYDVALSEQGEFKLLSEEKVPWDQVVMTSL) are Cytoplasmic-facing. An interacts with and activates NS3 protease region spans residues 1407–1446 (LKKLGEVSWEEEAEISGSSARYDVALSEQGEFKLLSEEKV). An intramembrane region (helical) is located at residues 1457–1477 (ALVGAAIHPFALLLVLAGWLF). The Cytoplasmic segment spans residues 1478 to 2157 (HVRGARRSGD…RNALSMMPEA (680 aa)). Residues 1485–1665 (SGDVLWDIPT…EVKEEGKEEL (181 aa)) form the Peptidase S7 domain. Residues His-1537, Asp-1561, and Ser-1622 each act as charge relay system; for serine protease NS3 activity in the active site. In terms of domain architecture, Helicase ATP-binding spans 1669–1825 (PTMLKKGMTT…HSNGEIEDVQ (157 aa)). The important for RNA-binding stretch occupies residues 1673–1676 (KKGM). Position 1682 to 1689 (1682 to 1689 (FHPGAGKT)) interacts with ATP. The short motif at 1773–1776 (DEAH) is the DEAH box element. One can recognise a Helicase C-terminal domain in the interval 1820–1997 (EIEDVQTDIP…VRGGMVAPLY (178 aa)). Lys-1877 carries the N6-acetyllysine; by host modification. The segment at 1942-1961 (AAQRRGRIGRNPNRDGDSYY) is disordered. The chain crosses the membrane as a helical span at residues 2158 to 2178 (MTIVMLFILAGLLTSGMVIFF). Over 2179-2186 (MSPKGISR) the chain is Lumenal. Residues 2187 to 2207 (MSMAMGTMAGCGYLMFLGGVK) constitute an intramembrane region (helical). Residues 2208–2209 (PT) lie on the Lumenal side of the membrane. A helical membrane pass occupies residues 2210 to 2230 (HISYIMLIFFVLMVVVIPEPG). At 2231–2241 (QQRSIQDNQVA) the chain is on the cytoplasmic side. A helical transmembrane segment spans residues 2242 to 2262 (YLIIGILTLVSVVAANELGML). Topologically, residues 2263–2293 (EKTKEDLFGKKNLIPSSASPWSWPDLDLKPG) are lumenal. An intramembrane region (helical) is located at residues 2294-2314 (AAWTVYVGIVTMLSPMLHHWI). Over 2315 to 2360 (KVEYGNLSLSGIAQSASVLSFMDKGIPFMKMNISVIILLVSGWNSI) the chain is Lumenal. The helical transmembrane segment at 2361-2380 (TVMPLLCGIGCAMLHWSLIL) threads the bilayer. At 2381 to 2421 (PGIKAQQSKLAQRRVFHGVAKNPVVDGNPTVDIEEAPEMPA) the chain is on the cytoplasmic side. A helical membrane pass occupies residues 2422–2442 (LYEKKLALYLLLALSLASVAM). Residues 2443-2445 (CRT) lie on the Lumenal side of the membrane. The helical transmembrane segment at 2446–2466 (PFSLAEGIVLASAALGPLIEG) threads the bilayer. Residues 2467–3411 (NTSLLWNGPM…DADLQPGELI (945 aa)) are Cytoplasmic-facing. Residues 2507 to 2771 (GSANGKTLGE…DVILPIGTRS (265 aa)) form the mRNA cap 0-1 NS5-type MT domain. Ser-2562 serves as a coordination point for S-adenosyl-L-methionine. Ser-2562 is subject to Phosphoserine. Lys-2567 acts as the For 2'-O-MTase activity in catalysis. S-adenosyl-L-methionine contacts are provided by Gly-2592, Trp-2593, Thr-2610, Leu-2611, Asp-2637, and Ile-2638. Asp-2652 serves as the catalytic For 2'-O-MTase activity. Ile-2653 lines the S-adenosyl-L-methionine pocket. Catalysis depends on for 2'-O-MTase activity residues Lys-2688 and Glu-2724. S-adenosyl-L-methionine is bound at residue Tyr-2726. The Nuclear localization signal signature appears at 2878-2911 (RKIMKVVNRWLFRHLAREKNPRLCTKEEFIAKVR). 4 residues coordinate Zn(2+): Glu-2945, His-2949, Cys-2954, and Cys-2957. Residues 3035–3187 (GGFYADDTAG…RPIDDRFGLA (153 aa)) form the RdRp catalytic domain. His-3222, Cys-3238, and Cys-3357 together coordinate Zn(2+).

In the N-terminal section; belongs to the class I-like SAM-binding methyltransferase superfamily. mRNA cap 0-1 NS5-type methyltransferase family. As to quaternary structure, homodimer. Interacts (via N-terminus) with host EXOC1 (via C-terminus); this interaction results in EXOC1 degradation through the proteasome degradation pathway. In terms of assembly, forms heterodimers with envelope protein E in the endoplasmic reticulum and Golgi. Homodimer; in the endoplasmic reticulum and Golgi. Interacts with protein prM. Interacts with non-structural protein 1. As to quaternary structure, homodimer; Homohexamer when secreted. Interacts with envelope protein E. NS1 interacts with NS4B. Interacts with host complement protein CFH; this interaction leads to the degradation of C3. In terms of assembly, interacts (via N-terminus) with serine protease NS3. Forms a heterodimer with serine protease NS3. May form homooligomers. As to quaternary structure, forms a heterodimer with NS2B. Interacts with non-structural protein 2A (via N-terminus). Interacts with NS4B. Interacts with unphosphorylated RNA-directed RNA polymerase NS5; this interaction stimulates RNA-directed RNA polymerase NS5 guanylyltransferase activity. NS3 interacts with host PDCD6IP; this interaction contributes to virion release. In terms of assembly, interacts with serine protease NS3. Homodimer. Interacts with host STAT2; this interaction prevents the establishment of cellular antiviral state. Interacts with serine protease NS3. Interacts with host TRIM23; this interaction leads to NS5 ubiquitination. Post-translationally, specific enzymatic cleavages in vivo yield mature proteins. The nascent capsid protein C contains a C-terminal hydrophobic domain that act as a signal sequence for translocation of prM into the lumen of the ER. Mature capsid protein C is cleaved at a site upstream of this hydrophobic domain by NS3. prM is cleaved in post-Golgi vesicles by a host furin, releasing the mature small envelope protein M, and peptide pr. Non-structural protein 2A-alpha, a C-terminally truncated form of non-structural protein 2A, results from partial cleavage by NS3. Specific enzymatic cleavages in vivo yield mature proteins peptide 2K acts as a signal sequence and is removed from the N-terminus of NS4B by the host signal peptidase in the ER lumen. Signal cleavage at the 2K-4B site requires a prior NS3 protease-mediated cleavage at the 4A-2K site. In terms of processing, cleaved in post-Golgi vesicles by a host furin, releasing the mature small envelope protein M, and peptide pr. This cleavage is incomplete as up to 30% of viral particles still carry uncleaved prM. N-glycosylated. Post-translationally, N-glycosylated. The excreted form is glycosylated and this is required for efficient secretion of the protein from infected cells. In terms of processing, polyubiquitinated; ubiquitination is probably mediated by host TRIM23 and is prerequisite for NS5-STAT2 interaction. NS5 is not ISGylated or sumoylated. Acetylated by host KAT5. Acetylation modulates NS3 RNA-binding and unwinding activities and plays an important positive role for viral replication. Post-translationally, phosphorylated on serines residues. This phosphorylation may trigger NS5 nuclear localization.

It is found in the virion. The protein resides in the host nucleus. The protein localises to the host cytoplasm. It localises to the host perinuclear region. Its subcellular location is the secreted. It is found in the virion membrane. The protein resides in the host endoplasmic reticulum membrane. It catalyses the reaction Selective hydrolysis of -Xaa-Xaa-|-Yaa- bonds in which each of the Xaa can be either Arg or Lys and Yaa can be either Ser or Ala.. The catalysed reaction is RNA(n) + a ribonucleoside 5'-triphosphate = RNA(n+1) + diphosphate. The enzyme catalyses a ribonucleoside 5'-triphosphate + H2O = a ribonucleoside 5'-diphosphate + phosphate + H(+). It carries out the reaction ATP + H2O = ADP + phosphate + H(+). It catalyses the reaction a 5'-end (5'-triphosphoguanosine)-ribonucleoside in mRNA + S-adenosyl-L-methionine = a 5'-end (N(7)-methyl 5'-triphosphoguanosine)-ribonucleoside in mRNA + S-adenosyl-L-homocysteine. The catalysed reaction is a 5'-end (N(7)-methyl 5'-triphosphoguanosine)-ribonucleoside in mRNA + S-adenosyl-L-methionine = a 5'-end (N(7)-methyl 5'-triphosphoguanosine)-(2'-O-methyl-ribonucleoside) in mRNA + S-adenosyl-L-homocysteine + H(+). Plays a role in virus budding by binding to the cell membrane and gathering the viral RNA into a nucleocapsid that forms the core of a mature virus particle. During virus entry, may induce genome penetration into the host cytoplasm after hemifusion induced by the surface proteins. Can migrate to the cell nucleus where it modulates host functions. Its function is as follows. Inhibits RNA silencing by interfering with host Dicer. In terms of biological role, prevents premature fusion activity of envelope proteins in trans-Golgi by binding to envelope protein E at pH6.0. After virion release in extracellular space, gets dissociated from E dimers. Functionally, acts as a chaperone for envelope protein E during intracellular virion assembly by masking and inactivating envelope protein E fusion peptide. prM is the only viral peptide matured by host furin in the trans-Golgi network probably to avoid catastrophic activation of the viral fusion activity in acidic Golgi compartment prior to virion release. prM-E cleavage is inefficient, and many virions are only partially matured. These uncleaved prM would play a role in immune evasion. May play a role in virus budding. Exerts cytotoxic effects by activating a mitochondrial apoptotic pathway through M ectodomain. May display a viroporin activity. Its function is as follows. Binds to host cell surface receptor and mediates fusion between viral and cellular membranes. Envelope protein is synthesized in the endoplasmic reticulum in the form of heterodimer with protein prM. They play a role in virion budding in the ER, and the newly formed immature particle is covered with 60 spikes composed of heterodimer between precursor prM and envelope protein E. The virion is transported to the Golgi apparatus where the low pH causes dissociation of PrM-E heterodimers and formation of E homodimers. prM-E cleavage is inefficient, and many virions are only partially matured. These uncleaved prM would play a role in immune evasion. In terms of biological role, involved in immune evasion, pathogenesis and viral replication. Once cleaved off the polyprotein, is targeted to three destinations: the viral replication cycle, the plasma membrane and the extracellular compartment. Essential for viral replication. Required for formation of the replication complex and recruitment of other non-structural proteins to the ER-derived membrane structures. Excreted as a hexameric lipoparticle that plays a role against host immune response. Antagonizing the complement function. Binds to the host macrophages and dendritic cells. Inhibits signal transduction originating from Toll-like receptor 3 (TLR3). Functionally, component of the viral RNA replication complex that functions in virion assembly and antagonizes the host immune response. Required cofactor for the serine protease function of NS3. May have membrane-destabilizing activity and form viroporins. Its function is as follows. Displays three enzymatic activities: serine protease, NTPase and RNA helicase. NS3 serine protease, in association with NS2B, performs its autocleavage and cleaves the polyprotein at dibasic sites in the cytoplasm: C-prM, NS2A-NS2B, NS2B-NS3, NS3-NS4A, NS4A-2K and NS4B-NS5. NS3 RNA helicase binds RNA and unwinds dsRNA in the 3' to 5' direction. Also plays a role in virus assembly. In terms of biological role, regulates the ATPase activity of the NS3 helicase activity. NS4A allows NS3 helicase to conserve energy during unwinding. Functionally, functions as a signal peptide for NS4B and is required for the interferon antagonism activity of the latter. Induces the formation of ER-derived membrane vesicles where the viral replication takes place. Inhibits interferon (IFN)-induced host STAT1 phosphorylation and nuclear translocation, thereby preventing the establishment of cellular antiviral state by blocking the IFN-alpha/beta pathway. Its function is as follows. Replicates the viral (+) and (-) RNA genome, and performs the capping of genomes in the cytoplasm. NS5 methylates viral RNA cap at guanine N-7 and ribose 2'-O positions. Besides its role in RNA genome replication, also prevents the establishment of cellular antiviral state by blocking the interferon-alpha/beta (IFN-alpha/beta) signaling pathway. IFN-I induces binding of NS5 to host IFN-activated transcription factor STAT2, preventing its transcriptional activity. Host TRIM23 is the E3 ligase that interacts with and polyubiquitinates NS5 to promote its binding to STAT2 and trigger IFN-I signaling inhibition. The protein is Genome polyprotein of Yellow fever virus (strain Ghana/Asibi/1927) (YFV).